A 278-amino-acid polypeptide reads, in one-letter code: Pca operon regulatory protein (278 aa).

The HTH iclR-type domain occupies 31–91 (VAGISKGMAI…SDGHYFYLTP (61 aa)). The segment at residues 53–72 (ITMAAEKTGMTRAAARRHLL) is a DNA-binding region (H-T-H motif). One can recognise an IclR-ED domain in the interval 106-278 (LPKISQPLLN…ETARELRNIL (173 aa)).

Functionally, activates transcription of the pca operon. The chain is Pca operon regulatory protein (pcaU) from Acinetobacter baylyi (strain ATCC 33305 / BD413 / ADP1).